The sequence spans 250 residues: Ubiquitin-conjugating enzyme E2 6 (250 aa).

Over 1 to 232 (MATKQAHKRL…DGKEPNDSSS (232 aa)) the chain is Cytoplasmic. Positions 5–167 (QAHKRLTKEY…VQENVETLEK (163 aa)) constitute a UBC core domain. Cys-87 functions as the Glycyl thioester intermediate in the catalytic mechanism. Ser-139 is modified (phosphoserine). Thr-178 carries the phosphothreonine modification. The segment at 209–229 (AEQALRQSENNSKKDGKEPND) is disordered. The span at 219–228 (NSKKDGKEPN) shows a compositional bias: basic and acidic residues. Residues 233–249 (MVYIGIAIFLFLVGLFM) traverse the membrane as a helical segment.

It belongs to the ubiquitin-conjugating enzyme family.

The protein localises to the endoplasmic reticulum membrane. The catalysed reaction is S-ubiquitinyl-[E1 ubiquitin-activating enzyme]-L-cysteine + [E2 ubiquitin-conjugating enzyme]-L-cysteine = [E1 ubiquitin-activating enzyme]-L-cysteine + S-ubiquitinyl-[E2 ubiquitin-conjugating enzyme]-L-cysteine.. The protein operates within protein modification; protein ubiquitination. Functionally, catalyzes the covalent attachment of ubiquitin to other proteins. Functions in degradation of misfolded or regulated proteins localized in the endoplasmic reticulum (ER) lumen or membrane via the ubiquitin-proteasome system. Cognate E2 conjugating enzyme for the DOA10 ubiquitin ligase complex, which is part of the ERAD-C pathway responsible for the rapid degradation of membrane proteins with misfolded cytoplasmic domains. The chain is Ubiquitin-conjugating enzyme E2 6 (UBC6) from Saccharomyces cerevisiae (strain ATCC 204508 / S288c) (Baker's yeast).